Here is a 266-residue protein sequence, read N- to C-terminus: Zinc transporter ZupT (266 aa).

8 helical membrane passes run 8-28, 35-55, 70-90, 123-143, 152-172, 185-205, 209-229, and 246-266; these read LLLT…ALVV, FLTL…FVEL, QAAA…IWAI, GLFT…AVFF, GIVI…AIAV, FTYS…GFAI, WLSP…MVYI, and LAIS…LLLA. Fe(2+) contacts are provided by Asn134 and Glu137. Residues Glu137 and His162 each coordinate Zn(2+). Residues Asn163, Glu166, and Glu195 each contribute to the Fe(2+) site. Residue Glu166 coordinates Zn(2+).

This sequence belongs to the ZIP transporter (TC 2.A.5) family. ZupT subfamily.

It localises to the cell membrane. It carries out the reaction Zn(2+)(in) = Zn(2+)(out). Its function is as follows. Mediates zinc uptake. May also transport other divalent cations. This is Zinc transporter ZupT from Chlorobium phaeovibrioides (strain DSM 265 / 1930) (Prosthecochloris vibrioformis (strain DSM 265)).